The primary structure comprises 172 residues: Large ribosomal subunit protein uL10 (172 aa).

This sequence belongs to the universal ribosomal protein uL10 family. Part of the ribosomal stalk of the 50S ribosomal subunit. The N-terminus interacts with L11 and the large rRNA to form the base of the stalk. The C-terminus forms an elongated spine to which L12 dimers bind in a sequential fashion forming a multimeric L10(L12)X complex.

In terms of biological role, forms part of the ribosomal stalk, playing a central role in the interaction of the ribosome with GTP-bound translation factors. This chain is Large ribosomal subunit protein uL10, found in Rhizobium leguminosarum bv. trifolii (strain WSM2304).